A 563-amino-acid chain; its full sequence is Pyruvate decarboxylase isozyme 2 (563 aa).

Positions 28, 115, 157, and 224 each coordinate pyruvate. Residues threonine 390 and glycine 413–isoleucine 415 contribute to the thiamine diphosphate site. Position 444 (aspartate 444) interacts with Mg(2+). Residues glycine 445–serine 446 and asparagine 471–isoleucine 476 contribute to the thiamine diphosphate site. The Mg(2+) site is built by asparagine 471 and glycine 473. Glutamate 477 is a binding site for pyruvate.

The protein belongs to the TPP enzyme family. Homotetramer. Mg(2+) serves as cofactor. It depends on thiamine diphosphate as a cofactor.

Its subcellular location is the cytoplasm. The protein localises to the nucleus. It catalyses the reaction pyruvate + H(+) = acetaldehyde + CO2. It carries out the reaction 3-methyl-2-oxobutanoate + H(+) = 2-methylpropanal + CO2. The enzyme catalyses (S)-3-methyl-2-oxopentanoate + H(+) = 2-methylbutanal + CO2. The catalysed reaction is indole-3-pyruvate + H(+) = indole-3-acetaldehyde + CO2. It catalyses the reaction 3-phenylpyruvate + H(+) = 2-phenylacetaldehyde + CO2. It carries out the reaction 2-oxobutanoate + H(+) = propanal + CO2. The enzyme catalyses 2-oxopentanoate + H(+) = butanal + CO2. The catalysed reaction is 2 acetaldehyde = acetoin. It catalyses the reaction acetaldehyde + pyruvate + H(+) = acetoin + CO2. It functions in the pathway fermentation; ethanol fermentation. It participates in amino-acid degradation; Ehrlich pathway. Allosterically activated by its substrate, pyruvate. Its function is as follows. Second most abundant of three pyruvate decarboxylases (PDC1, PDC5, PDC6) implicated in the nonoxidative conversion of pyruvate to acetaldehyde and carbon dioxide during alcoholic fermentation. Most of the produced acetaldehyde is subsequently reduced to ethanol, but some is required for cytosolic acetyl-CoA production for biosynthetic pathways. The enzyme is also one of five 2-oxo acid decarboxylases (PDC1, PDC5, PDC6, ARO10, and THI3) able to decarboxylate more complex 2-oxo acids (alpha-keto-acids) than pyruvate, which seem mainly involved in amino acid catabolism. Here the enzyme catalyzes the decarboxylation of amino acids, which, in a first step, have been transaminated to the corresponding 2-oxo acids. In a third step, the resulting aldehydes are reduced to alcohols, collectively referred to as fusel oils or alcohols. Its preferred substrates are the transaminated amino acids derived from threonine (2-oxobutanoate), norvaline (2-oxopentanoate), valine (3-methyl-2-oxobutanoate, also alpha-keto-isovalerate), isoleucine ((3S)-3-methyl-2-oxopentanoate, also alpha-keto-beta-methylvalerate), phenylalanine (phenylpyruvate), and tryptophan (3-(indol-3-yl)pyruvate), whereas transaminated leucine is no substrate. In a side-reaction the carbanionic intermediate (or active aldehyde) generated by decarboxylation or by activation of an aldehyde can react with an aldehyde via condensation (or carboligation) yielding a 2-hydroxy ketone, collectively called acyloins. The protein is Pyruvate decarboxylase isozyme 2 (PDC5) of Saccharomyces cerevisiae (strain ATCC 204508 / S288c) (Baker's yeast).